The sequence spans 149 residues: Large ribosomal subunit protein bL17 (149 aa).

Belongs to the bacterial ribosomal protein bL17 family. In terms of assembly, part of the 50S ribosomal subunit. Contacts protein L32.

The polypeptide is Large ribosomal subunit protein bL17 (Kosmotoga olearia (strain ATCC BAA-1733 / DSM 21960 / TBF 19.5.1)).